Here is a 125-residue protein sequence, read N- to C-terminus: MPTINQLVRQGRTVEVVKSKSPAMENCPQRRGVCTRVYTTTPKKPNSALRKVAKVRLTNGFEVISYIGGEGHNLQEHSVVLVRGGRVKDLPGVRYHIVRGSLDLQGVKDRKQARSKYGAKKPKAK.

Asp89 carries the post-translational modification 3-methylthioaspartic acid.

Belongs to the universal ribosomal protein uS12 family. As to quaternary structure, part of the 30S ribosomal subunit. Contacts proteins S8 and S17. May interact with IF1 in the 30S initiation complex.

Its function is as follows. With S4 and S5 plays an important role in translational accuracy. In terms of biological role, interacts with and stabilizes bases of the 16S rRNA that are involved in tRNA selection in the A site and with the mRNA backbone. Located at the interface of the 30S and 50S subunits, it traverses the body of the 30S subunit contacting proteins on the other side and probably holding the rRNA structure together. The combined cluster of proteins S8, S12 and S17 appears to hold together the shoulder and platform of the 30S subunit. In Acidovorax sp. (strain JS42), this protein is Small ribosomal subunit protein uS12.